The following is a 137-amino-acid chain: MKPLRKERLQQAIKQELSKILLEDMNDERLKFVTITDVELSDDQKYLKVYFSTMPGKNSEQILQSLERVKGYVSGEVARTLRLRFAPEIKFELDNSIERGVRMVKLLEDLEKKDEVKEDESHEDESTDHTEETNEEP.

Residues 112 to 137 (KKDEVKEDESHEDESTDHTEETNEEP) form a disordered region. Basic and acidic residues predominate over residues 127–137 (TDHTEETNEEP).

This sequence belongs to the RbfA family. Monomer. Binds 30S ribosomal subunits, but not 50S ribosomal subunits or 70S ribosomes.

Its subcellular location is the cytoplasm. Functionally, one of several proteins that assist in the late maturation steps of the functional core of the 30S ribosomal subunit. Associates with free 30S ribosomal subunits (but not with 30S subunits that are part of 70S ribosomes or polysomes). Required for efficient processing of 16S rRNA. May interact with the 5'-terminal helix region of 16S rRNA. This chain is Ribosome-binding factor A, found in Coprothermobacter proteolyticus (strain ATCC 35245 / DSM 5265 / OCM 4 / BT).